The chain runs to 69 residues: Cell division protein ZapB (69 aa).

The stretch at 3-60 (LELFNQLEQKVQNAVETIEMLKMEAEELREENTRLKQERDEWERRLNGLLGKFQEIED) forms a coiled coil.

It belongs to the ZapB family. As to quaternary structure, homodimer. The ends of the coiled-coil dimer bind to each other, forming polymers. Interacts with FtsZ.

It is found in the cytoplasm. Non-essential, abundant cell division factor that is required for proper Z-ring formation. It is recruited early to the divisome by direct interaction with FtsZ, stimulating Z-ring assembly and thereby promoting cell division earlier in the cell cycle. Its recruitment to the Z-ring requires functional FtsA or ZipA. This is Cell division protein ZapB from Chromohalobacter salexigens (strain ATCC BAA-138 / DSM 3043 / CIP 106854 / NCIMB 13768 / 1H11).